Reading from the N-terminus, the 197-residue chain is dITP/XTP pyrophosphatase (197 aa).

Residue Thr-9–Lys-14 coordinates substrate. Mg(2+)-binding residues include Glu-42 and Asp-71. Catalysis depends on Asp-71, which acts as the Proton acceptor. Residues Ser-72, Phe-153–Asp-156, Lys-176, and His-181–Arg-182 contribute to the substrate site.

This sequence belongs to the HAM1 NTPase family. As to quaternary structure, homodimer. Mg(2+) is required as a cofactor.

It catalyses the reaction XTP + H2O = XMP + diphosphate + H(+). The enzyme catalyses dITP + H2O = dIMP + diphosphate + H(+). It carries out the reaction ITP + H2O = IMP + diphosphate + H(+). Its function is as follows. Pyrophosphatase that catalyzes the hydrolysis of nucleoside triphosphates to their monophosphate derivatives, with a high preference for the non-canonical purine nucleotides XTP (xanthosine triphosphate), dITP (deoxyinosine triphosphate) and ITP. Seems to function as a house-cleaning enzyme that removes non-canonical purine nucleotides from the nucleotide pool, thus preventing their incorporation into DNA/RNA and avoiding chromosomal lesions. This chain is dITP/XTP pyrophosphatase, found in Leptospira interrogans serogroup Icterohaemorrhagiae serovar copenhageni (strain Fiocruz L1-130).